A 535-amino-acid chain; its full sequence is Protoheme IX farnesyltransferase (535 aa).

Residues 1–263 are unknown; that stretch reads MRRENARVVA…DYVSLTKPGV (263 aa). 14 helical membrane-spanning segments follow: residues 18 to 38, 40 to 60, 83 to 103, 127 to 147, 163 to 183, 197 to 217, 262 to 282, 285 to 305, 334 to 354, 357 to 377, 385 to 405, 412 to 432, 474 to 494, and 509 to 529; these read WMVI…SIIP, MTGA…LAMY, YLTL…AGAL, WPAL…AALA, VACA…QVLL, LTHL…VTLA, GVIS…PAGI, WSLV…SHSI, HALA…AIFV, LTAL…TIWL, IVIG…AVTG, LLLW…LALI, LLGM…GLFL, and AWAL…AMVV. The protoheme IX prenyltransferase stretch occupies residues 264-535; that stretch reads ISLLILTTIT…AMVVDRAVFA (272 aa).

It in the C-terminal section; belongs to the UbiA prenyltransferase family. Protoheme IX farnesyltransferase subfamily.

Its subcellular location is the cell membrane. It carries out the reaction heme b + (2E,6E)-farnesyl diphosphate + H2O = Fe(II)-heme o + diphosphate. The protein operates within porphyrin-containing compound metabolism; heme O biosynthesis; heme O from protoheme: step 1/1. In terms of biological role, converts heme B (protoheme IX) to heme O by substitution of the vinyl group on carbon 2 of heme B porphyrin ring with a hydroxyethyl farnesyl side group. The sequence is that of Protoheme IX farnesyltransferase (ctaB) from Roseiflexus castenholzii (strain DSM 13941 / HLO8).